We begin with the raw amino-acid sequence, 158 residues long: Large ribosomal subunit protein uL11 (158 aa).

The protein belongs to the universal ribosomal protein uL11 family. Part of the ribosomal stalk of the 50S ribosomal subunit. Interacts with L10 and the large rRNA to form the base of the stalk. L10 forms an elongated spine to which L12 dimers bind in a sequential fashion forming a multimeric L10(L12)X complex.

Functionally, forms part of the ribosomal stalk which helps the ribosome interact with GTP-bound translation factors. The sequence is that of Large ribosomal subunit protein uL11 from Methanoregula boonei (strain DSM 21154 / JCM 14090 / 6A8).